Reading from the N-terminus, the 535-residue chain is KNR4/SMI1 homolog (535 aa).

A compositionally biased stretch (basic and acidic residues) spans 354–363; the sequence is ERKLPEEPKR. A disordered region spans residues 354–535; it reads ERKLPEEPKR…LKDDFENVAL (182 aa). 3 stretches are compositionally biased toward polar residues: residues 364–384, 397–407, and 456–469; these read TVSS…QETA, TSLSVDNTGTK, and ESTN…TSQE. Residues 474 to 483 show a composition bias toward basic and acidic residues; sequence TSEKPEEKPK. Over residues 484-494 the composition is skewed to basic residues; that stretch reads KQSKKASKKKG. 2 stretches are compositionally biased toward basic and acidic residues: residues 495–509 and 524–535; these read KKDE…TKEP and EKLKDDFENVAL.

This sequence belongs to the KNR4/SMI1 family.

This Kluyveromyces lactis (strain ATCC 8585 / CBS 2359 / DSM 70799 / NBRC 1267 / NRRL Y-1140 / WM37) (Yeast) protein is KNR4/SMI1 homolog.